A 442-amino-acid polypeptide reads, in one-letter code: Proline--tRNA ligase (442 aa).

This sequence belongs to the class-II aminoacyl-tRNA synthetase family. ProS type 2 subfamily. Homodimer.

It is found in the cytoplasm. The enzyme catalyses tRNA(Pro) + L-proline + ATP = L-prolyl-tRNA(Pro) + AMP + diphosphate. Its function is as follows. Catalyzes the attachment of proline to tRNA(Pro) in a two-step reaction: proline is first activated by ATP to form Pro-AMP and then transferred to the acceptor end of tRNA(Pro). The polypeptide is Proline--tRNA ligase (Chelativorans sp. (strain BNC1)).